A 138-amino-acid chain; its full sequence is Nucleoside diphosphate kinase (138 aa).

Residues K12, Y60, R88, T94, R105, and N115 each coordinate ATP. The active-site Pros-phosphohistidine intermediate is the H118.

It belongs to the NDK family. Homotetramer. Mg(2+) serves as cofactor.

The protein localises to the cytoplasm. It carries out the reaction a 2'-deoxyribonucleoside 5'-diphosphate + ATP = a 2'-deoxyribonucleoside 5'-triphosphate + ADP. The catalysed reaction is a ribonucleoside 5'-diphosphate + ATP = a ribonucleoside 5'-triphosphate + ADP. Major role in the synthesis of nucleoside triphosphates other than ATP. The ATP gamma phosphate is transferred to the NDP beta phosphate via a ping-pong mechanism, using a phosphorylated active-site intermediate. This is Nucleoside diphosphate kinase from Cutibacterium acnes (strain DSM 16379 / KPA171202) (Propionibacterium acnes).